Consider the following 31-residue polypeptide: Cytochrome b6-f complex subunit 6 (31 aa).

A helical transmembrane segment spans residues 4-24 (IFSYIALLLSALVITLTCYIG).

The protein belongs to the PetL family. In terms of assembly, the 4 large subunits of the cytochrome b6-f complex are cytochrome b6, subunit IV (17 kDa polypeptide, PetD), cytochrome f and the Rieske protein, while the 4 small subunits are PetG, PetL, PetM and PetN. The complex functions as a dimer.

Its subcellular location is the plastid. The protein localises to the chloroplast thylakoid membrane. In terms of biological role, component of the cytochrome b6-f complex, which mediates electron transfer between photosystem II (PSII) and photosystem I (PSI), cyclic electron flow around PSI, and state transitions. PetL is important for photoautotrophic growth as well as for electron transfer efficiency and stability of the cytochrome b6-f complex. This Chlorella vulgaris (Green alga) protein is Cytochrome b6-f complex subunit 6.